The primary structure comprises 190 residues: MKRLISCLTIICALNASAAAETTSNPCSRWISFLKPVCQRIHQTWTEGHDDMYFSGYAWHNRYVYSNEKIKSYNETAWGGGLGKSLFDEKGNWHGLYAIAFLDSHRHLEPAVGYAYLKTASVNKDLKAGLGYSVLVTSRVDYDNVPIPGALPWAALFYKRITIAATYIPGSSREGHENGNVLYMLGKISL.

Residues 1 to 18 (MKRLISCLTIICALNASA) form the signal peptide. Residues H60, D103, and S104 contribute to the active site.

The protein belongs to the lipid A palmitoyltransferase family. In terms of assembly, homodimer.

It is found in the cell outer membrane. It catalyses the reaction a lipid A + a 1,2-diacyl-sn-glycero-3-phosphocholine = a hepta-acyl lipid A + a 2-acyl-sn-glycero-3-phosphocholine. The enzyme catalyses a lipid IVA + a 1,2-diacyl-sn-glycero-3-phosphocholine = a lipid IVB + a 2-acyl-sn-glycero-3-phosphocholine. The catalysed reaction is a lipid IIA + a 1,2-diacyl-sn-glycero-3-phosphocholine = a lipid IIB + a 2-acyl-sn-glycero-3-phosphocholine. Transfers a fatty acid residue from the sn-1 position of a phospholipid to the N-linked hydroxyfatty acid chain on the proximal unit of lipid A or its precursors. This Legionella pneumophila subsp. pneumophila (strain Philadelphia 1 / ATCC 33152 / DSM 7513) protein is Lipid A acyltransferase PagP.